We begin with the raw amino-acid sequence, 934 residues long: MAKDNKDVTEAPVNFGANLGLMLDLYDDYLQDPSSVPDDLQVLFSTIKNGEAHVAAKSTTEGSGSSAGDGTIKRIMRLIDNIRQYGHLKADIYPVNAPKRTNLPKLEIEEFNLDKETLENVSAEIVSDHFKDIYDNAYEAIERMEKRYKGPIAFEYNHINNNKERTWLKRRIETPYRANINNDERKKLFDTLAHVEGFEKYLHKNFVGAKRFSIEGVDTLVPMLQHTLKRAAEIEINNIQIGMAHRGRLNVLTHVLEKPYEMMISEFMHTDPMKFLPEDGSLELTAGWTGDVKYHLGGVKTTSSYGIEQRISLANNPSHLEIVAPVVIGKTRASQDDTKHAGKPTTDFHKGMPIIIHGDAAYPGQGINFETMNLSNLDGYSTGGALHIITNNRIGFTTEPVDGRSTTYSTDIAKGYDVPILHVNADDVEATIEAIDIAMEFRKEFHKDFVIDLVGYRRYGHNEMDEPSITNPLPYHNIRKHDSVEIIYGNKLVEDGVISKEQMEDVMDKVQKEMRAAQDKIDKSDKMDNPDMERPESLQEPLQSDDKDFSVDHLKEINDAMLTYPEDFHVLKKLNKVLEKRREPFESENGLVDWAQAEQLAFATIVQDGISVRLTGQDSERGTFSHRHAVLHDEENGDTFTPLHHVPNQKATFEVHNSPLSEAAVVGFEYGYNVENKNSMNIWEAQYGDFSNMAQMMFDNFMSSARAKWGERSGLTLFLPHAFEGQGPEHSSARLERFLQLAAENNSTVVNLSSSSNYFHLLRAQAKSLGTEAMRPLIVMSPKSLLRNKTVAKPIDQFTSGGFKPIIVEDGNKEKVTKLVLASGKMFIDLKEHLAKNPDDSILLVAVDRLYPFPEGEIKEVLNELPNLETVSWVQEEPKNQGAWLFVYPYLKSLVGNQFNLSYHGRIQRAAPAEGDGEIHKLVQNQIIESSIEK.

Basic and acidic residues predominate over residues 515–537 (RAAQDKIDKSDKMDNPDMERPES). The segment at 515–544 (RAAQDKIDKSDKMDNPDMERPESLQEPLQS) is disordered.

The protein belongs to the alpha-ketoglutarate dehydrogenase family. In terms of assembly, homodimer. Part of the 2-oxoglutarate dehydrogenase (OGDH) complex composed of E1 (2-oxoglutarate dehydrogenase), E2 (dihydrolipoamide succinyltransferase) and E3 (dihydrolipoamide dehydrogenase); the complex contains multiple copies of the three enzymatic components (E1, E2 and E3). Thiamine diphosphate serves as cofactor.

The catalysed reaction is N(6)-[(R)-lipoyl]-L-lysyl-[protein] + 2-oxoglutarate + H(+) = N(6)-[(R)-S(8)-succinyldihydrolipoyl]-L-lysyl-[protein] + CO2. In terms of biological role, E1 component of the 2-oxoglutarate dehydrogenase (OGDH) complex which catalyzes the decarboxylation of 2-oxoglutarate, the first step in the conversion of 2-oxoglutarate to succinyl-CoA and CO(2). The protein is 2-oxoglutarate dehydrogenase E1 component of Staphylococcus haemolyticus (strain JCSC1435).